The primary structure comprises 149 residues: D-aminoacyl-tRNA deacylase (149 aa).

Positions 137 to 138 (GP) match the Gly-cisPro motif, important for rejection of L-amino acids motif.

This sequence belongs to the DTD family. In terms of assembly, homodimer.

The protein resides in the cytoplasm. It carries out the reaction glycyl-tRNA(Ala) + H2O = tRNA(Ala) + glycine + H(+). The catalysed reaction is a D-aminoacyl-tRNA + H2O = a tRNA + a D-alpha-amino acid + H(+). In terms of biological role, an aminoacyl-tRNA editing enzyme that deacylates mischarged D-aminoacyl-tRNAs. Also deacylates mischarged glycyl-tRNA(Ala), protecting cells against glycine mischarging by AlaRS. Acts via tRNA-based rather than protein-based catalysis; rejects L-amino acids rather than detecting D-amino acids in the active site. By recycling D-aminoacyl-tRNA to D-amino acids and free tRNA molecules, this enzyme counteracts the toxicity associated with the formation of D-aminoacyl-tRNA entities in vivo and helps enforce protein L-homochirality. This Anaeromyxobacter dehalogenans (strain 2CP-C) protein is D-aminoacyl-tRNA deacylase.